Reading from the N-terminus, the 340-residue chain is Ketol-acid reductoisomerase (NADP(+)) (340 aa).

A KARI N-terminal Rossmann domain is found at 1 to 182 (MRVYYDRDCD…GGGRSGIIET (182 aa)). NADP(+) is bound by residues 24 to 27 (YGSQ), arginine 48, serine 51, serine 53, and 83 to 86 (DELQ). Histidine 108 is a catalytic residue. Position 134 (glycine 134) interacts with NADP(+). Residues 183–329 (NFRQECETDL…EKLRGMMPWI (147 aa)) form the KARI C-terminal knotted domain. Residues aspartate 191, glutamate 195, glutamate 227, and glutamate 231 each contribute to the Mg(2+) site. Serine 252 is a binding site for substrate.

This sequence belongs to the ketol-acid reductoisomerase family. It depends on Mg(2+) as a cofactor.

It catalyses the reaction (2R)-2,3-dihydroxy-3-methylbutanoate + NADP(+) = (2S)-2-acetolactate + NADPH + H(+). It carries out the reaction (2R,3R)-2,3-dihydroxy-3-methylpentanoate + NADP(+) = (S)-2-ethyl-2-hydroxy-3-oxobutanoate + NADPH + H(+). The protein operates within amino-acid biosynthesis; L-isoleucine biosynthesis; L-isoleucine from 2-oxobutanoate: step 2/4. It participates in amino-acid biosynthesis; L-valine biosynthesis; L-valine from pyruvate: step 2/4. Involved in the biosynthesis of branched-chain amino acids (BCAA). Catalyzes an alkyl-migration followed by a ketol-acid reduction of (S)-2-acetolactate (S2AL) to yield (R)-2,3-dihydroxy-isovalerate. In the isomerase reaction, S2AL is rearranged via a Mg-dependent methyl migration to produce 3-hydroxy-3-methyl-2-ketobutyrate (HMKB). In the reductase reaction, this 2-ketoacid undergoes a metal-dependent reduction by NADPH to yield (R)-2,3-dihydroxy-isovalerate. The chain is Ketol-acid reductoisomerase (NADP(+)) from Cereibacter sphaeroides (strain ATCC 17025 / ATH 2.4.3) (Rhodobacter sphaeroides).